A 417-amino-acid polypeptide reads, in one-letter code: NADH-quinone oxidoreductase subunit D (417 aa).

The protein belongs to the complex I 49 kDa subunit family. As to quaternary structure, NDH-1 is composed of 14 different subunits. Subunits NuoB, C, D, E, F, and G constitute the peripheral sector of the complex.

It is found in the cell inner membrane. The enzyme catalyses a quinone + NADH + 5 H(+)(in) = a quinol + NAD(+) + 4 H(+)(out). Functionally, NDH-1 shuttles electrons from NADH, via FMN and iron-sulfur (Fe-S) centers, to quinones in the respiratory chain. The immediate electron acceptor for the enzyme in this species is believed to be ubiquinone. Couples the redox reaction to proton translocation (for every two electrons transferred, four hydrogen ions are translocated across the cytoplasmic membrane), and thus conserves the redox energy in a proton gradient. This Burkholderia multivorans (strain ATCC 17616 / 249) protein is NADH-quinone oxidoreductase subunit D.